A 613-amino-acid polypeptide reads, in one-letter code: MLSRTVFVPLILAFVGVSISAPVSNNNGTDNDESAADQRHIFTVQFNVGTPAPADGDSVTTDGKDSAEKNEAPGDSSDTTEKPGTTDGKDSAEQHGVTTDGKDEAEQHGVTTDGQDSAEKRGEADGAPDKPDTQNGTDDTDSDQETDASHHKTGDSDENKDKPSAEDHTDGNHAGKDSTDSKESPDTTDKPEGPDSDSAPDGDSASAEKTDSDHSPDEDANKSSTEADKDDTSDKDSSQTDEKHDSDASDKDEKHEDKDEKSDEKDSSKDSEDKSQEKSDKSDDGSNSEADEQKESVESKDHDSDSQDSDSAEKKEKHDDKDQDSSDSADSKDSDEDKDKDHSEQKDSEDHEHKEKHTKDKEEHKDSDEGKDDEDKSKSDEHDKDESESKEASKSDESEQEEKKDDKSDSDNSSRDSHSDSDSDSHSDSDSDSHSDSHSDSDSDSHSDSDSDSDSDSDSDSDSDSDSNSRDKDEKKDKSSESRDEDSSDSDSKSNSESSETAEEDTNDDKDSSVEKDKTDSSDSASVEANDSDDEHDDDSKDATPSSEDHTAEKTDEDSHDVSDDDDDIDAHDDEAGVEHGTDEASKPHQEPDHHDDTTHGSDDGRKTSMPIS.

Residues 1-20 (MLSRTVFVPLILAFVGVSIS) form the signal peptide. The interval 42-613 (FTVQFNVGTP…DGRKTSMPIS (572 aa)) is disordered. Composition is skewed to basic and acidic residues over residues 62–72 (DGKDSAEKNEA), 117–132 (SAEKRGEADGAPDKPD), 147–193 (DASH…KPEG), 206–284 (SAEK…KSDD), and 291–449 (DEQK…HSDS). Over residues 450 to 465 (DSDSDSDSDSDSDSDS) the composition is skewed to acidic residues. Composition is skewed to basic and acidic residues over residues 467–482 (SNSRDKDEKKDKSSES), 509–521 (DKDSSVEKDKTDS), and 538–554 (DDSKDATPSSEDHTAEK). Over residues 555–573 (TDEDSHDVSDDDDDIDAHD) the composition is skewed to acidic residues. Positions 574–607 (DEAGVEHGTDEASKPHQEPDHHDDTTHGSDDGRK) are enriched in basic and acidic residues.

It is found in the secreted. Essential for the formation of otoliths in the inner ear of developing larvae and for the perception of gravity and acceleration. May be one of the organic components of the ortholiths. This is Protein starmaker (stm) from Danio rerio (Zebrafish).